The chain runs to 75 residues: Small ribosomal subunit protein bS18 (75 aa).

The protein belongs to the bacterial ribosomal protein bS18 family. In terms of assembly, part of the 30S ribosomal subunit. Forms a tight heterodimer with protein bS6.

Binds as a heterodimer with protein bS6 to the central domain of the 16S rRNA, where it helps stabilize the platform of the 30S subunit. The chain is Small ribosomal subunit protein bS18 from Pasteurella multocida (strain Pm70).